Reading from the N-terminus, the 366-residue chain is tRNA/tmRNA (uracil-C(5))-methyltransferase (366 aa).

Residues Gln-190, Tyr-218, Asn-223, Glu-239, and Asp-299 each coordinate S-adenosyl-L-methionine. The active-site Nucleophile is the Cys-324. The active-site Proton acceptor is the Glu-358.

Belongs to the class I-like SAM-binding methyltransferase superfamily. RNA M5U methyltransferase family. TrmA subfamily.

The enzyme catalyses uridine(54) in tRNA + S-adenosyl-L-methionine = 5-methyluridine(54) in tRNA + S-adenosyl-L-homocysteine + H(+). It catalyses the reaction uridine(341) in tmRNA + S-adenosyl-L-methionine = 5-methyluridine(341) in tmRNA + S-adenosyl-L-homocysteine + H(+). Its function is as follows. Dual-specificity methyltransferase that catalyzes the formation of 5-methyluridine at position 54 (m5U54) in all tRNAs, and that of position 341 (m5U341) in tmRNA (transfer-mRNA). This Escherichia fergusonii (strain ATCC 35469 / DSM 13698 / CCUG 18766 / IAM 14443 / JCM 21226 / LMG 7866 / NBRC 102419 / NCTC 12128 / CDC 0568-73) protein is tRNA/tmRNA (uracil-C(5))-methyltransferase.